A 157-amino-acid polypeptide reads, in one-letter code: Serine-protein kinase RsbW (157 aa).

The protein belongs to the anti-sigma-factor family.

It catalyses the reaction L-seryl-[protein] + ATP = O-phospho-L-seryl-[protein] + ADP + H(+). The enzyme catalyses L-threonyl-[protein] + ATP = O-phospho-L-threonyl-[protein] + ADP + H(+). In terms of biological role, negative regulator of sigma-B activity. Phosphorylates and inactivates its specific antagonist protein, RsbV. Upon phosphorylation of RsbV, RsbW is released and binds to sigma-B, thereby blocking its ability to form an RNA polymerase holoenzyme (E-sigma-B). The protein is Serine-protein kinase RsbW of Listeria monocytogenes serotype 4b (strain CLIP80459).